A 1894-amino-acid chain; its full sequence is Fibronectin type III domain-containing protein 1 (1894 aa).

Positions 1–32 (MAPEAGATLRAPRRLSWAALLLLAALLPVASS) are cleaved as a signal peptide. Residues 39 to 131 (HPLKPRHVKL…PVYRAESPPG (93 aa)) form the Fibronectin type-III 1 domain. Residue Asn149 is glycosylated (N-linked (GlcNAc...) asparagine). Fibronectin type-III domains are found at residues 158-258 (PNKP…SEED), 262-357 (VPDD…TPES), and 362-457 (APEN…MPTT). 4 disordered regions span residues 455-500 (PTTS…PQGR), 515-1271 (ANGG…TVSP), 1311-1350 (LSRQ…IING), and 1444-1515 (THPP…CPPG). The span at 565–574 (TLRPPSRHGH) shows a compositional bias: basic residues. A compositionally biased stretch (low complexity) spans 614–625 (PSASASPAHHAS). The segment covering 626–641 (TQGTSHRPSLPASLND) has biased composition (polar residues). Low complexity-rich tracts occupy residues 711 to 722 (SASAPPSRLSPP) and 759 to 778 (SRST…TQVS). Ser717 carries the post-translational modification Phosphoserine. Positions 786–799 (GESHGDGDREDGGR) are enriched in basic and acidic residues. Composition is skewed to polar residues over residues 941–957 (KYSS…QSTD) and 1027–1060 (SPSQ…TASS). Over residues 1071–1088 (QDEDAQGSYDDDSTEVEA) the composition is skewed to acidic residues. The segment covering 1166–1176 (PLSSKSQQSVS) has biased composition (polar residues). Over residues 1197-1209 (SSSVPKWPSSSTP) the composition is skewed to low complexity. Basic and acidic residues predominate over residues 1211–1226 (GGKDADGSLAKEEREP). A compositionally biased stretch (low complexity) spans 1445–1504 (HPPTTTMQPTTTTTPLPTTTTPRPTTATTRRTTTTRRTTTRRPTTTVRTTTRTTTTTTPT). The region spanning 1658 to 1752 (APRNITVVAV…PSVSFVTESD (95 aa)) is the Fibronectin type-III 5 domain. An N-linked (GlcNAc...) asparagine glycan is attached at Asn1661.

Almost absent from healthy skin; especially in epidermal keratinocytes, skin fibroblasts or endothelial cells and is barely detectable in benign melanocytic naevi. Expressed in the stroma close to skin tumors, in the tumor cells themselves and in the epidermis of psoriasis.

Its subcellular location is the secreted. May be an activator of G protein signaling. The polypeptide is Fibronectin type III domain-containing protein 1 (FNDC1) (Homo sapiens (Human)).